The chain runs to 502 residues: Glycerol kinase (502 aa).

Position 13 (Thr-13) interacts with ADP. ATP contacts are provided by Thr-13, Thr-14, and Ser-15. Thr-13 serves as a coordination point for sn-glycerol 3-phosphate. Arg-17 is an ADP binding site. Sn-glycerol 3-phosphate contacts are provided by Arg-83, Glu-84, Tyr-136, and Asp-246. Residues Arg-83, Glu-84, Tyr-136, Asp-246, and Gln-247 each contribute to the glycerol site. ADP is bound by residues Thr-268 and Gly-311. 4 residues coordinate ATP: Thr-268, Gly-311, Gln-315, and Gly-412. Residues Gly-412 and Asn-416 each contribute to the ADP site.

Belongs to the FGGY kinase family.

The enzyme catalyses glycerol + ATP = sn-glycerol 3-phosphate + ADP + H(+). The protein operates within polyol metabolism; glycerol degradation via glycerol kinase pathway; sn-glycerol 3-phosphate from glycerol: step 1/1. With respect to regulation, inhibited by fructose 1,6-bisphosphate (FBP). Key enzyme in the regulation of glycerol uptake and metabolism. Catalyzes the phosphorylation of glycerol to yield sn-glycerol 3-phosphate. The protein is Glycerol kinase of Francisella tularensis subsp. tularensis (strain WY96-3418).